The following is a 488-amino-acid chain: Histone deacetylase 2 (488 aa).

A histone deacetylase region spans residues 9 to 322 (KKKVCYYYDG…WTYETAVALD (314 aa)). Positions 28 and 32 each coordinate 1D-myo-inositol 1,4,5,6-tetrakisphosphate. Residue lysine 75 is modified to N6-acetyllysine; alternate. A Glycyl lysine isopeptide (Lys-Gly) (interchain with G-Cter in SUMO2); alternate cross-link involves residue lysine 75. Residue histidine 142 is part of the active site. 8 residues coordinate Ca(2+): aspartate 175, aspartate 177, histidine 179, phenylalanine 188, threonine 191, valine 194, serine 198, and phenylalanine 199. The Zn(2+) site is built by aspartate 177 and histidine 179. The residue at position 221 (lysine 221) is an N6-acetyllysine. Ca(2+) is bound at residue tyrosine 223. An S-nitrosocysteine modification is found at cysteine 262. Aspartate 265 contributes to the Zn(2+) binding site. Arginine 271 contacts 1D-myo-inositol 1,4,5,6-tetrakisphosphate. An S-nitrosocysteine modification is found at cysteine 274. The interval 389–488 (AVHEDSGDED…GAKSEQLSNP (100 aa)) is disordered. Residues serine 394, serine 407, serine 422, and serine 424 each carry the phosphoserine modification. Residues 402–417 (PDKRISIRASDKRIAC) are compositionally biased toward basic and acidic residues. A compositionally biased stretch (acidic residues) spans 418–428 (DEEFSDSEDEG). A compositionally biased stretch (basic and acidic residues) spans 429-481 (EGGRRNVADHKKGAKKARIEEDKKETEDKKTDVKEEDKSKDNSGEKTDPKGAK). Glycyl lysine isopeptide (Lys-Gly) (interchain with G-Cter in SUMO2) cross-links involve residues lysine 439, lysine 452, lysine 458, lysine 462, lysine 478, and lysine 481.

The protein belongs to the histone deacetylase family. HD type 1 subfamily. As to quaternary structure, part of the core histone deacetylase (HDAC) complex composed of HDAC1, HDAC2, RBBP4 and RBBP7, the core complex associates with SIN3, SAP18 and SAP30 to form the SIN3 HDAC complex. Component of the nucleosome remodeling and deacetylase (NuRD) repressor complex, composed of core proteins MTA1, MTA2, MTA3, RBBP4, RBBP7, HDAC1, HDAC2, MBD2, MBD3, and peripherally associated proteins CDK2AP1, CDK2AP2, GATAD2A, GATAD2B, CHD3, CHD4 and CHD5. The exact stoichiometry of the NuRD complex is unknown, and some subunits such as MBD2 and MBD3, GATAD2A and GATAD2B, and CHD3, CHD4 and CHD5 define mutually exclusive NuRD complexes. Component of a RCOR/GFI/KDM1A/HDAC complex. Component of a BHC histone deacetylase complex that contains HDAC1, HDAC2, HMG20B, KDM1A, RCOR1 and PHF21A. The BHC complex may also contain ZMYM2, ZNF217, ZMYM3, GSE1 and GTF2I. Part of a complex containing the core histones H2A, H2B, H3 and H4, DEK and unphosphorylated DAXX. Part of a complex containing ATR and CHD4. Forms a heterologous complex at least with YY1. Interacts in the late S-phase of DNA-replication with DNMT1 in the other transcriptional repressor complex composed of DNMT1, DMAP1, PCNA, CAF1. Component of a mSin3A corepressor complex that contains SIN3A, SAP130, SUDS3, ARID4B, HDAC1 and HDAC2. Part of a complex composed of TRIM28, HDAC1, HDAC2 and EHMT2. Part of a complex containing at least CDYL, MIER1, MIER2, HDAC1 and HDAC2. Component of a histone deacetylase complex containing DNTTIP1, ZNF541, HDAC1 and HDAC2. Forms a complex comprising APPL1, RUVBL2, APPL2, CTNNB1 and HDAC1. Interacts directly with GFI1. Interacts directly with GFI1B. Interacts with APEX1; the interaction is not dependent on the acetylated status of APEX1. Interacts with ATR. Interacts with BCL6 (non-acetylated form). Interacts with BEND3. Interacts with CBFA2T3. Interacts with CDK2AP1. Interacts with CHD4. Interacts with CHD5. Interacts with CHFR. Interacts with CRY1. Interacts with DNMT1. Interacts with GATAD2A. Interacts with HCFC1. Interacts with HDAC7. Interacts with HDAC10. Interacts with INSM1. Interacts with KDM4A. Interacts with MACROH2A1 (via the non-histone region). Interacts with MBD3L2. Interacts with MTA1, with a preference for sumoylated MTA1. Interacts with NACC2. Interacts with NRIP1. Interacts with PELP1. Interacts with PIMREG. Interacts with PRDM6. Interacts with PWWP2B Interacts with SAP30. Interacts with SAP30L. Interacts with SETDB1. Interacts with SIX3. Interacts with SMARCAD1. Interacts with SNW1. Interacts with SPHK2. Interacts with SPEN/MINT. Interacts (CK2 phosphorylated form) with SP3. Interacts with SUV39H1. Interacts with TSHZ3 (via its N-terminus). Interacts with ZMYND8. Interacts with ZNF431. Interacts with ZNF263; recruited to the SIX3 promoter along with other proteins involved in chromatin modification and transcriptional corepression where it contributes to transcriptional repression. Identified in a complex with HDAC1, KCTD19, DNTTIP1 and ZNF541. Component of the SIN3B complex, which includes SIN3B, HDAC2, PHF12 and MORF4L1; interacts directly with all subunits. The cofactor is Zn(2+). Ca(2+) serves as cofactor. S-nitrosylated by GAPDH. In neurons, S-nitrosylation at Cys-262 and Cys-274 does not affect enzyme activity, but induces HDAC2 release from chromatin. This in turn increases acetylation of histones surrounding neurotrophin-dependent gene promoters and promotes their transcription. In embryonic cortical neurons, S-Nitrosylation regulates dendritic growth and branching.

Its subcellular location is the nucleus. It localises to the cytoplasm. The enzyme catalyses N(6)-acetyl-L-lysyl-[histone] + H2O = L-lysyl-[histone] + acetate. The catalysed reaction is N(6)-acetyl-L-lysyl-[protein] + H2O = L-lysyl-[protein] + acetate. It catalyses the reaction N(6)-(2E)-butenoyl-L-lysyl-[protein] + H2O = (2E)-2-butenoate + L-lysyl-[protein]. It carries out the reaction N(6)-(2-hydroxyisobutanoyl)-L-lysyl-[protein] + H2O = 2-hydroxy-2-methylpropanoate + L-lysyl-[protein]. The enzyme catalyses N(6)-[(S)-lactoyl]-L-lysyl-[protein] + H2O = (S)-lactate + L-lysyl-[protein]. With respect to regulation, inositol tetraphosphate (1D-myo-inositol 1,4,5,6-tetrakisphosphate) may act as an intermolecular glue between HDAC2 and N-Cor repressor complex components. Its function is as follows. Histone deacetylase that catalyzes the deacetylation of lysine residues on the N-terminal part of the core histones (H2A, H2B, H3 and H4). Histone deacetylation gives a tag for epigenetic repression and plays an important role in transcriptional regulation, cell cycle progression and developmental events. Histone deacetylases act via the formation of large multiprotein complexes. Forms transcriptional repressor complexes by associating with MAD, SIN3, YY1 and N-COR. Component of a RCOR/GFI/KDM1A/HDAC complex that suppresses, via histone deacetylase (HDAC) recruitment, a number of genes implicated in multilineage blood cell development. Acts as a component of the histone deacetylase NuRD complex which participates in the remodeling of chromatin. Component of the SIN3B complex that represses transcription and counteracts the histone acetyltransferase activity of EP300 through the recognition H3K27ac marks by PHF12 and the activity of the histone deacetylase HDAC2. Also deacetylates non-histone targets: deacetylates TSHZ3, thereby regulating its transcriptional repressor activity. May be involved in the transcriptional repression of circadian target genes, such as PER1, mediated by CRY1 through histone deacetylation. Involved in MTA1-mediated transcriptional corepression of TFF1 and CDKN1A. In addition to protein deacetylase activity, also acts as a protein-lysine deacylase by recognizing other acyl groups: catalyzes removal of (2E)-butenoyl (crotonyl), lactoyl (lactyl) and 2-hydroxyisobutanoyl (2-hydroxyisobutyryl) acyl groups from lysine residues, leading to protein decrotonylation, delactylation and de-2-hydroxyisobutyrylation, respectively. This chain is Histone deacetylase 2, found in Mus musculus (Mouse).